Consider the following 251-residue polypeptide: Ubiquinone/menaquinone biosynthesis C-methyltransferase UbiE (251 aa).

S-adenosyl-L-methionine contacts are provided by residues T74, D95, 123–124 (NA), and S140.

This sequence belongs to the class I-like SAM-binding methyltransferase superfamily. MenG/UbiE family.

The catalysed reaction is a 2-demethylmenaquinol + S-adenosyl-L-methionine = a menaquinol + S-adenosyl-L-homocysteine + H(+). It catalyses the reaction a 2-methoxy-6-(all-trans-polyprenyl)benzene-1,4-diol + S-adenosyl-L-methionine = a 5-methoxy-2-methyl-3-(all-trans-polyprenyl)benzene-1,4-diol + S-adenosyl-L-homocysteine + H(+). It participates in quinol/quinone metabolism; menaquinone biosynthesis; menaquinol from 1,4-dihydroxy-2-naphthoate: step 2/2. It functions in the pathway cofactor biosynthesis; ubiquinone biosynthesis. In terms of biological role, methyltransferase required for the conversion of demethylmenaquinol (DMKH2) to menaquinol (MKH2) and the conversion of 2-polyprenyl-6-methoxy-1,4-benzoquinol (DDMQH2) to 2-polyprenyl-3-methyl-6-methoxy-1,4-benzoquinol (DMQH2). This is Ubiquinone/menaquinone biosynthesis C-methyltransferase UbiE from Klebsiella pneumoniae (strain 342).